A 252-amino-acid polypeptide reads, in one-letter code: tRNA1(Val) (adenine(37)-N6)-methyltransferase (252 aa).

Belongs to the methyltransferase superfamily. tRNA (adenine-N(6)-)-methyltransferase family.

Its subcellular location is the cytoplasm. The catalysed reaction is adenosine(37) in tRNA1(Val) + S-adenosyl-L-methionine = N(6)-methyladenosine(37) in tRNA1(Val) + S-adenosyl-L-homocysteine + H(+). Its function is as follows. Specifically methylates the adenine in position 37 of tRNA(1)(Val) (anticodon cmo5UAC). This chain is tRNA1(Val) (adenine(37)-N6)-methyltransferase, found in Proteus mirabilis (strain HI4320).